The following is a 601-amino-acid chain: Glutamine--fructose-6-phosphate aminotransferase [isomerizing] (601 aa).

The Nucleophile; for GATase activity role is filled by C2. The Glutamine amidotransferase type-2 domain occupies 2-218 (CGIVGYIGYD…DHEIVIVKKD (217 aa)). SIS domains lie at 284-423 (IIND…EHGR) and 453-591 (IATD…VDKP). K596 acts as the For Fru-6P isomerization activity in catalysis.

Homodimer.

The protein localises to the cytoplasm. The catalysed reaction is D-fructose 6-phosphate + L-glutamine = D-glucosamine 6-phosphate + L-glutamate. Its function is as follows. Catalyzes the first step in hexosamine metabolism, converting fructose-6P into glucosamine-6P using glutamine as a nitrogen source. This chain is Glutamine--fructose-6-phosphate aminotransferase [isomerizing], found in Staphylococcus aureus (strain MRSA252).